A 235-amino-acid chain; its full sequence is Ribosomal RNA small subunit methyltransferase G (235 aa).

S-adenosyl-L-methionine contacts are provided by residues Gly-98, Met-103, 149–150 (VE), and Arg-164.

This sequence belongs to the methyltransferase superfamily. RNA methyltransferase RsmG family.

Its subcellular location is the cytoplasm. The enzyme catalyses guanosine(527) in 16S rRNA + S-adenosyl-L-methionine = N(7)-methylguanosine(527) in 16S rRNA + S-adenosyl-L-homocysteine. Specifically methylates the N7 position of guanine in position 527 of 16S rRNA. The protein is Ribosomal RNA small subunit methyltransferase G of Cupriavidus pinatubonensis (strain JMP 134 / LMG 1197) (Cupriavidus necator (strain JMP 134)).